The primary structure comprises 484 residues: MIQVLLVTICLAVFPYQGSSIILESGNVDDYEVVYPRRVSALPKGAVQPKYEDAMQYEFKVNGEAVVLHLEKNKGLFSEDYSETHYSPDGREITTYPSVEDHCYYHGRIHNDADSTASISACDGLKGYFKLQGETYLIEPLKLPDSEAHAVYKYENIEKEDEAPKMCGVTQNWESDESIKKASQLNLTPLQQRFLQRYVKLAIVVDYRMYIKYNRDSNKITVRAHEMVNHVNEMYKPLNITITLSLLQIWSQNDLITVQPASSITLRLFGNWRKTVLLNQQNHDNAQLLTDIVFNGRTIGKAPVAGMCQPDRSVGVVRDYSSNVFVVAVIMTHELGHNLGMEHDEDKNEKKCKCDTCIMAPAISDPPAQLFSDCSKNDYQLFLTVYNPQCILNAPLRTDTVSTPVSGNEFLEAGEECDCGSPENPCCDAATCKLRPGAQCAEGLCCDQCRFKKKRTICRRARGDNPDDRCTGQSADCPRNGLYG.

The signal sequence occupies residues 1-20 (MIQVLLVTICLAVFPYQGSS). The propeptide occupies 21–190 (IILESGNVDD…KASQLNLTPL (170 aa)). Positions 197 to 395 (RYVKLAIVVD…YNPQCILNAP (199 aa)) constitute a Peptidase M12B domain. Residue asparagine 239 is glycosylated (N-linked (GlcNAc...) asparagine). 3 disulfide bridges follow: cysteine 308-cysteine 390, cysteine 352-cysteine 374, and cysteine 354-cysteine 357. Histidine 333 is a Zn(2+) binding site. The active site involves glutamate 334. 2 residues coordinate Zn(2+): histidine 337 and histidine 343. A propeptide spanning residues 396–413 (LRTDTVSTPVSGNEFLEA) is cleaved from the precursor. Residues 403 to 484 (TPVSGNEFLE…ADCPRNGLYG (82 aa)) enclose the Disintegrin domain. Disulfide bonds link cysteine 417–cysteine 432, cysteine 419–cysteine 427, cysteine 426–cysteine 449, cysteine 440–cysteine 446, cysteine 445–cysteine 470, and cysteine 458–cysteine 477. A Cell attachment site motif is present at residues 462-464 (RGD).

Belongs to the venom metalloproteinase (M12B) family. P-II subfamily. P-IIa sub-subfamily. In terms of assembly, monomer. Zn(2+) is required as a cofactor. In terms of tissue distribution, expressed by the venom gland.

The protein resides in the secreted. Impairs hemostasis in the envenomed animal. Its function is as follows. Inhibits platelet aggregation induced by ADP, thrombin, platelet-activating factor and collagen. Acts by inhibiting fibrinogen interaction with platelet receptors GPIIb/GPIIIa (ITGA2B/ITGB3). The sequence is that of Zinc metalloproteinase/disintegrin PMMP-2 from Protobothrops mucrosquamatus (Taiwan habu).